Reading from the N-terminus, the 369-residue chain is uncharacterized protein (369 aa).

Residues 1 to 35 form a disordered region; that stretch reads MQTNNPSYFFRSESALQDEKRKEEKSHNPNGNPRN. Residues 17–27 are compositionally biased toward basic and acidic residues; sequence QDEKRKEEKSH. 6 WD repeats span residues 83–127, 130–169, 174–213, 220–260, 263–301, and 304–341; these read GHSG…CVET, GHTD…SRLL, GHSR…GSQL, GHQS…HEET, EHPD…VKDI, and GHYE…DNNE.

This is an uncharacterized protein from Schizosaccharomyces pombe (strain 972 / ATCC 24843) (Fission yeast).